A 220-amino-acid polypeptide reads, in one-letter code: MKCLLCGQTMKTVLTFSSLLLLRNDDSCLCSDCDSTFERIGEENCPNCMKTELSTKCQDCQLWCKEGVGVSHRAIFTYNQAMKDFFSRYKFDGDFLLRKVFASFLSEELKKYKEYQFVVIPLSPDRYANRGFNQVEGLVEAAGFEYLDLLEKREERASSSKNRSERLGTELPFFIKSGVTIPKKILLIDDIYTTGATINRVKKLLEEAGAKDVKTFSLVR.

The protein belongs to the ComF/GntX family. In terms of assembly, monomer and dimer in solution. Interacts with ComFA and DprA; ComFA-ComFC form rings about 150 Angstroms in diameter with apparent 6-fold symmetry.

Involved in transformation (genetic competence for DNA uptake). The protein is Competence protein ComFC of Streptococcus pneumoniae (strain ATCC BAA-255 / R6).